Consider the following 290-residue polypeptide: Ribosomal RNA small subunit methyltransferase A (290 aa).

Positions 27, 29, 54, 75, 100, and 125 each coordinate S-adenosyl-L-methionine.

The protein belongs to the class I-like SAM-binding methyltransferase superfamily. rRNA adenine N(6)-methyltransferase family. RsmA subfamily.

Its subcellular location is the cytoplasm. It catalyses the reaction adenosine(1518)/adenosine(1519) in 16S rRNA + 4 S-adenosyl-L-methionine = N(6)-dimethyladenosine(1518)/N(6)-dimethyladenosine(1519) in 16S rRNA + 4 S-adenosyl-L-homocysteine + 4 H(+). Functionally, specifically dimethylates two adjacent adenosines (A1518 and A1519) in the loop of a conserved hairpin near the 3'-end of 16S rRNA in the 30S particle. May play a critical role in biogenesis of 30S subunits. This is Ribosomal RNA small subunit methyltransferase A from Streptococcus pyogenes serotype M1.